The primary structure comprises 103 residues: Small ribosomal subunit protein uS10 (103 aa).

The protein belongs to the universal ribosomal protein uS10 family. As to quaternary structure, part of the 30S ribosomal subunit.

Involved in the binding of tRNA to the ribosomes. The sequence is that of Small ribosomal subunit protein uS10 from Chromobacterium violaceum (strain ATCC 12472 / DSM 30191 / JCM 1249 / CCUG 213 / NBRC 12614 / NCIMB 9131 / NCTC 9757 / MK).